Reading from the N-terminus, the 48-residue chain is Large ribosomal subunit protein bL32 (48 aa).

A compositionally biased stretch (basic residues) spans 1–20 (MAVPKRRVSKTRAAKRRTHY). The disordered stretch occupies residues 1 to 48 (MAVPKRRVSKTRAAKRRTHYKVSLPIPVKDKDGSWKLPHRINTKTGEY).

The protein belongs to the bacterial ribosomal protein bL32 family.

The polypeptide is Large ribosomal subunit protein bL32 (Campylobacter hominis (strain ATCC BAA-381 / DSM 21671 / CCUG 45161 / LMG 19568 / NCTC 13146 / CH001A)).